The primary structure comprises 290 residues: Glyceraldehyde-3-phosphate dehydrogenase (290 aa).

NAD(+)-binding residues include Asp-13 and Arg-58. Residues 129 to 131, Thr-160, 189 to 190, and Arg-212 each bind D-glyceraldehyde 3-phosphate; these read SCT and TG. Catalysis depends on Cys-130, which acts as the Nucleophile.

Belongs to the glyceraldehyde-3-phosphate dehydrogenase family. As to quaternary structure, homotetramer.

The protein resides in the cytoplasm. The catalysed reaction is D-glyceraldehyde 3-phosphate + phosphate + NAD(+) = (2R)-3-phospho-glyceroyl phosphate + NADH + H(+). It functions in the pathway carbohydrate degradation; glycolysis; pyruvate from D-glyceraldehyde 3-phosphate: step 1/5. This chain is Glyceraldehyde-3-phosphate dehydrogenase (GPD), found in Lactarius deterrimus (False saffron milkcap).